The primary structure comprises 420 residues: D-tagatose-1,6-bisphosphate aldolase subunit GatZ (420 aa).

Belongs to the GatZ/KbaZ family. GatZ subfamily. In terms of assembly, forms a complex with GatY.

Its pathway is carbohydrate metabolism; D-tagatose 6-phosphate degradation; D-glyceraldehyde 3-phosphate and glycerone phosphate from D-tagatose 6-phosphate: step 2/2. Functionally, component of the tagatose-1,6-bisphosphate aldolase GatYZ that is required for full activity and stability of the Y subunit. Could have a chaperone-like function for the proper and stable folding of GatY. When expressed alone, GatZ does not show any aldolase activity. Is involved in the catabolism of galactitol. In Escherichia coli O9:H4 (strain HS), this protein is D-tagatose-1,6-bisphosphate aldolase subunit GatZ.